The primary structure comprises 250 residues: 1-acyl-sn-glycerol-3-phosphate acyltransferase (250 aa).

Residues 88–93 carry the HXXXXD motif motif; sequence HIAAMD.

It belongs to the 1-acyl-sn-glycerol-3-phosphate acyltransferase family.

The catalysed reaction is a 1-acyl-sn-glycero-3-phosphate + an acyl-CoA = a 1,2-diacyl-sn-glycero-3-phosphate + CoA. It functions in the pathway phospholipid metabolism; CDP-diacylglycerol biosynthesis; CDP-diacylglycerol from sn-glycerol 3-phosphate: step 2/3. Its function is as follows. Converts lysophosphatidic acid (LPA) into phosphatidic acid by incorporating acyl moiety at the 2 position. This chain is 1-acyl-sn-glycerol-3-phosphate acyltransferase (plsC), found in Borreliella burgdorferi (strain ATCC 35210 / DSM 4680 / CIP 102532 / B31) (Borrelia burgdorferi).